The chain runs to 428 residues: 3-phosphoshikimate 1-carboxyvinyltransferase (428 aa).

3-phosphoshikimate contacts are provided by lysine 23, serine 24, and arginine 28. A phosphoenolpyruvate-binding site is contributed by lysine 23. Glycine 97 and arginine 125 together coordinate phosphoenolpyruvate. Positions 170, 171, 172, 198, 314, 337, and 341 each coordinate 3-phosphoshikimate. Phosphoenolpyruvate is bound at residue glutamine 172. Aspartate 314 acts as the Proton acceptor in catalysis. Residues arginine 345, arginine 387, and lysine 412 each coordinate phosphoenolpyruvate.

The protein belongs to the EPSP synthase family. As to quaternary structure, monomer.

The protein resides in the cytoplasm. It carries out the reaction 3-phosphoshikimate + phosphoenolpyruvate = 5-O-(1-carboxyvinyl)-3-phosphoshikimate + phosphate. The protein operates within metabolic intermediate biosynthesis; chorismate biosynthesis; chorismate from D-erythrose 4-phosphate and phosphoenolpyruvate: step 6/7. In terms of biological role, catalyzes the transfer of the enolpyruvyl moiety of phosphoenolpyruvate (PEP) to the 5-hydroxyl of shikimate-3-phosphate (S3P) to produce enolpyruvyl shikimate-3-phosphate and inorganic phosphate. This Hamiltonella defensa subsp. Acyrthosiphon pisum (strain 5AT) protein is 3-phosphoshikimate 1-carboxyvinyltransferase.